The chain runs to 5193 residues: Usherin (5193 aa).

Residues 1–34 (MHYLALSPGFLCYTIKTLILAYLASVLVLAASQG) form the signal peptide. Over 35–5033 (VFPRLENVGA…KSTEFYSELW (4999 aa)) the chain is Extracellular. N-linked (GlcNAc...) asparagine glycans are attached at residues asparagine 230, asparagine 258, asparagine 274, asparagine 358, asparagine 415, asparagine 448, and asparagine 469. One can recognise a Laminin N-terminal domain in the interval 268 to 514 (QDFRLYNVSL…AVDEIIVSGR (247 aa)). Disulfide bonds link cysteine 515/cysteine 524, cysteine 517/cysteine 533, cysteine 535/cysteine 546, cysteine 549/cysteine 569, cysteine 572/cysteine 581, cysteine 574/cysteine 602, cysteine 605/cysteine 614, cysteine 617/cysteine 635, cysteine 638/cysteine 652, cysteine 640/cysteine 659, cysteine 661/cysteine 670, cysteine 673/cysteine 688, cysteine 691/cysteine 705, cysteine 693/cysteine 712, cysteine 714/cysteine 723, cysteine 726/cysteine 741, cysteine 744/cysteine 756, cysteine 746/cysteine 763, cysteine 765/cysteine 774, cysteine 777/cysteine 789, cysteine 792/cysteine 805, cysteine 794/cysteine 812, cysteine 814/cysteine 823, and cysteine 826/cysteine 846. 10 Laminin EGF-like domains span residues 515-571 (CQCH…NCKP), 572-637 (CQCH…ACKL), 638-690 (CDCN…GCRP), 691-743 (CNCN…GCEP), 744-791 (CQCN…ACEV), 792-848 (CDCS…NCEK), 853-896 (NGSL…GCQA), 897-947 (CDCD…GCLP), 948-998 (CLCH…RCRP), and 999-1049 (CHCH…GCSK). Asparagine 647 is a glycosylation site (N-linked (GlcNAc...) asparagine). N-linked (GlcNAc...) asparagine glycans are attached at residues asparagine 836 and asparagine 853. Cystine bridges form between cysteine 867–cysteine 876, cysteine 879–cysteine 894, cysteine 897–cysteine 910, cysteine 899–cysteine 917, cysteine 919–cysteine 928, cysteine 931–cysteine 945, cysteine 948–cysteine 960, cysteine 950–cysteine 967, cysteine 969–cysteine 979, cysteine 982–cysteine 996, cysteine 999–cysteine 1011, cysteine 1001–cysteine 1018, cysteine 1020–cysteine 1029, and cysteine 1032–cysteine 1047. An N-linked (GlcNAc...) asparagine glycan is attached at asparagine 885. A glycan (N-linked (GlcNAc...) asparagine) is linked at asparagine 941. An N-linked (GlcNAc...) asparagine glycan is attached at asparagine 1008. Fibronectin type-III domains lie at 1055–1143 (PPPR…TKPE), 1147–1241 (GHLN…APPQ), 1242–1357 (TQGP…SVPV), 1358–1462 (FMAP…AAPA), and 1463–1566 (QLRP…LQLK). N-linked (GlcNAc...) asparagine glycans are attached at residues asparagine 1068, asparagine 1089, asparagine 1150, asparagine 1171, and asparagine 1222. Residues asparagine 1382, asparagine 1473, and asparagine 1626 are each glycosylated (N-linked (GlcNAc...) asparagine). Laminin G-like domains follow at residues 1511–1700 (TKGT…WEGC) and 1705–1882 (EEGV…QDGC). A disulfide bridge links cysteine 1663 with cysteine 1700. Asparagine 1770 carries an N-linked (GlcNAc...) asparagine glycan. Fibronectin type-III domains are found at residues 1847–1946 (EPGF…TAPQ), 1948–2045 (VPTP…TPQE), 2046–2132 (APQE…TAQL), 2133–2234 (PPEQ…IPEG), 2235–2321 (VPAP…APPE), 2322–2421 (GVVN…SVEM), 2422–2525 (PPGA…DKPG), 2526–2613 (PIDA…TLPG), 2617–2713 (GIPS…TRPC), 2717–2810 (GVQP…THPA), 2811–2914 (PPQE…TLAG), 2918–3009 (RGAT…MWEE), and 3013–3103 (GMLP…TPSD). A disulfide bond links cysteine 1853 and cysteine 1882. N-linked (GlcNAc...) asparagine glycosylation is present at asparagine 1894. The interval 1931–1955 (VSSDWSRGRTLGTAPQSVPTPSRAQ) is disordered. Residues 1943 to 1955 (TAPQSVPTPSRAQ) are compositionally biased toward polar residues. 10 N-linked (GlcNAc...) asparagine glycosylation sites follow: asparagine 1958, asparagine 2095, asparagine 2121, asparagine 2177, asparagine 2186, asparagine 2249, asparagine 2276, asparagine 2313, asparagine 2368, and asparagine 2404. N-linked (GlcNAc...) asparagine glycans are attached at residues asparagine 2575, asparagine 2647, asparagine 2701, asparagine 2761, and asparagine 2779. Asparagine 2928, asparagine 2998, asparagine 3023, asparagine 3090, asparagine 3208, asparagine 3322, and asparagine 3411 each carry an N-linked (GlcNAc...) asparagine glycan. 17 consecutive Fibronectin type-III domains span residues 3395–3489 (CPAT…TRED), 3490–3580 (VPEG…TTQR), 3581–3671 (SPEN…TLQA), 3672–3766 (APQG…TPED), 3769–3857 (PPCN…TLEA), 3858–3955 (APVG…TLEA), 3956–4059 (PPRG…SAPS), 4060–4148 (GLMN…APPD), 4149–4256 (TQMA…APPD), 4257–4346 (GLSP…TPEV), 4347–4437 (PPSE…APPE), 4438–4522 (NMDP…TSPS), 4523–4625 (APSG…VPPL), 4628–4725 (PAPH…TGPA), 4726–4818 (PPEG…THPA), 4819–4921 (PPSG…TKKE), and 4922–5005 (MPQY…YDAA). N-linked (GlcNAc...) asparagine glycans are attached at residues asparagine 3589, asparagine 3645, asparagine 3686, asparagine 3712, asparagine 3723, and asparagine 3772. Residues asparagine 3976, asparagine 4063, asparagine 4194, asparagine 4218, asparagine 4304, asparagine 4340, asparagine 4365, and asparagine 4410 are each glycosylated (N-linked (GlcNAc...) asparagine). N-linked (GlcNAc...) asparagine glycans are attached at residues asparagine 4556, asparagine 4575, asparagine 4683, asparagine 4716, asparagine 4746, asparagine 4756, asparagine 4765, asparagine 4915, and asparagine 4934. The helical transmembrane segment at 5034 to 5054 (FIMVMAVVGLILLAIFLSLIL) threads the bilayer. Over 5055 to 5193 (QRKIHKEPCI…EHTAFTDTHL (139 aa)) the chain is Cytoplasmic. Residues 5191–5193 (THL) carry the PDZ-binding motif.

As to quaternary structure, interacts with collagen IV and fibronectin via its laminin EGF-like domains. Interaction with collagen may be required for stable integration into the basement membrane. Interacts with NINL. Interacts with USH1C. Component of USH2 complex, composed of ADGRV1, PDZD7, USH2A and WHRN. Interacts with ADGRV1/MASS1 (via N-terminal PDZ domain). Interacts (via the cytoplasmic region) with WHRN. Interacts (via the cytoplasmic region) with PDZD7. Interacts (via the cytoplasmic region) with VEZT and MYO7A (via MyTH4-FERM domains); the interaction associates VEZT with the USH2 complex at the stereocilia base. As to expression, present in the testis, epididymis, oviduct, spleen, submaxillary gland, and small and large intestines. Not detected in the brain, skin, lung, skeletal muscle, cardiac muscle, liver or kidney. Expressed in smooth muscle of the colon and the epididymis. Also present in select vascular basement membranes. In the cochlea, it is present in virtually every basement membrane. It is particularly high in the strial capillary basement membranes (SCBMs). In the retina, it is again expressed in all of the basement membranes. It is also very prevalent in the lens capsule and the Bruch's layer between the retinal pigment epithelium and the choroid layer, which is very rich in basement membranes. In neonates in it is widely expressed in the basement membranes of the cochlea. Present in the synaptic terminals of retinal photoreceptors (at protein level).

It localises to the cell projection. The protein resides in the stereocilium membrane. The protein localises to the photoreceptor inner segment. Its subcellular location is the secreted. Involved in hearing and vision as member of the USH2 complex. In the inner ear, required for the maintenance of hair bundle ankle formation, which connects growing stereocilia in developing cochlear hair cells. In retina photoreceptors, the USH2 complex is required for the maintenance of periciliary membrane complex that seems to play a role in regulating intracellular protein transport. The sequence is that of Usherin (Ush2A) from Mus musculus (Mouse).